A 209-amino-acid polypeptide reads, in one-letter code: Thymidylate kinase (209 aa).

10 to 17 (GLDGAGKS) provides a ligand contact to ATP.

The protein belongs to the thymidylate kinase family.

It carries out the reaction dTMP + ATP = dTDP + ADP. Functionally, phosphorylation of dTMP to form dTDP in both de novo and salvage pathways of dTTP synthesis. The sequence is that of Thymidylate kinase from Francisella tularensis subsp. tularensis (strain FSC 198).